The chain runs to 121 residues: Large ribosomal subunit protein bL12 (121 aa).

It belongs to the bacterial ribosomal protein bL12 family. As to quaternary structure, homodimer. Part of the ribosomal stalk of the 50S ribosomal subunit. Forms a multimeric L10(L12)X complex, where L10 forms an elongated spine to which 2 to 4 L12 dimers bind in a sequential fashion. Binds GTP-bound translation factors.

Functionally, forms part of the ribosomal stalk which helps the ribosome interact with GTP-bound translation factors. Is thus essential for accurate translation. This Shewanella frigidimarina (strain NCIMB 400) protein is Large ribosomal subunit protein bL12.